Consider the following 434-residue polypeptide: MTAYHFVGIKGTGMSALAQVLHDLGYTVQGSDVEKWFFTQKALEERGIPVLPFSKDNIRPGYTVIAGNAFPDTHEEIEAARQLGVPVIRYHRFLGQLAGKFTSIAVTGSHGKTTTTGLLAHVMQGAHPTSYLIGDGTGKGEPGSKYFVFEACEYRRHFLSYFPDYAIMTNIDFDHPDYFANVDDVFSAFQQMANQVKKAIVACGDDPYLPNIQAKVPILFYGFGEENDFQARNIVKTTEGMAFDVFVRNTFFASFAIPRFGTHNVLNALAVIALCHYEGVDAGTIAKRLQTFQGVKRRFSEKTVGRQVLIDDYAHHPREITATLEAARQKYPGREVVAIFQPHTYTRTQTFLREFAESLLQADHVYLCDIFGSAREHEGKLTIRDLQAQIPRSQLLEEQNVAVLKQHQDAVLVFMGAGDIQKFQQAYERAVLSA.

Residue 108 to 114 (GSHGKTT) participates in ATP binding.

Belongs to the MurCDEF family.

It localises to the cytoplasm. The enzyme catalyses UDP-N-acetyl-alpha-D-muramate + L-alanine + ATP = UDP-N-acetyl-alpha-D-muramoyl-L-alanine + ADP + phosphate + H(+). It functions in the pathway cell wall biogenesis; peptidoglycan biosynthesis. Its function is as follows. Cell wall formation. This Geobacillus kaustophilus (strain HTA426) protein is UDP-N-acetylmuramate--L-alanine ligase.